A 207-amino-acid polypeptide reads, in one-letter code: 3,4-dihydroxy-2-butanone 4-phosphate synthase (207 aa).

D-ribulose 5-phosphate-binding positions include 28-29 (RE), Asp-33, 140-144 (RRGHT), and Glu-164. Residue Glu-29 coordinates Mg(2+). His-143 serves as a coordination point for Mg(2+).

This sequence belongs to the DHBP synthase family. In terms of assembly, homodimer. The cofactor is Mg(2+). Requires Mn(2+) as cofactor.

The catalysed reaction is D-ribulose 5-phosphate = (2S)-2-hydroxy-3-oxobutyl phosphate + formate + H(+). It functions in the pathway cofactor biosynthesis; riboflavin biosynthesis; 2-hydroxy-3-oxobutyl phosphate from D-ribulose 5-phosphate: step 1/1. Its function is as follows. Catalyzes the conversion of D-ribulose 5-phosphate to formate and 3,4-dihydroxy-2-butanone 4-phosphate. The polypeptide is 3,4-dihydroxy-2-butanone 4-phosphate synthase (Oceanobacillus iheyensis (strain DSM 14371 / CIP 107618 / JCM 11309 / KCTC 3954 / HTE831)).